Consider the following 209-residue polypeptide: Kynurenine formamidase (209 aa).

Phenylalanine 18 is a binding site for substrate. The Zn(2+) site is built by histidine 48, histidine 52, and aspartate 54. Histidine 58 acts as the Proton donor/acceptor in catalysis. Zn(2+) contacts are provided by histidine 160 and glutamate 172.

This sequence belongs to the Cyclase 1 superfamily. KynB family. In terms of assembly, homodimer. The cofactor is Zn(2+).

The enzyme catalyses N-formyl-L-kynurenine + H2O = L-kynurenine + formate + H(+). Its pathway is amino-acid degradation; L-tryptophan degradation via kynurenine pathway; L-kynurenine from L-tryptophan: step 2/2. Catalyzes the hydrolysis of N-formyl-L-kynurenine to L-kynurenine, the second step in the kynurenine pathway of tryptophan degradation. This Bordetella avium (strain 197N) protein is Kynurenine formamidase.